The primary structure comprises 756 residues: Multicystatin (756 aa).

8 Cystatin domains span residues 3-96, 97-191, 192-285, 286-380, 381-474, 475-568, 569-662, and 663-756; these read IVGG…DDST, MPGG…DDIA, KLGG…DDSA, KTGG…DSAK, IIGG…DDSA, and KPGG…DATK. 8 short sequence motifs (secondary area of contact) span residues 48–52, 142–146, 237–241, 331–335, 426–430, 520–524, 614–618, and 708–712; these read QIVAG, QVVAG, QLVSG, and QLVAG.

The protein belongs to the cystatin family. Phytocystatin subfamily. In terms of tissue distribution, expressed abundantly in tuber and leaf.

Probably has a role in the plant's defense system. This chain is Multicystatin, found in Solanum tuberosum (Potato).